Consider the following 199-residue polypeptide: Nucleoside triphosphate pyrophosphatase (199 aa).

Asp-76 acts as the Proton acceptor in catalysis.

This sequence belongs to the Maf family. It depends on a divalent metal cation as a cofactor.

The protein localises to the cytoplasm. The catalysed reaction is a ribonucleoside 5'-triphosphate + H2O = a ribonucleoside 5'-phosphate + diphosphate + H(+). It carries out the reaction a 2'-deoxyribonucleoside 5'-triphosphate + H2O = a 2'-deoxyribonucleoside 5'-phosphate + diphosphate + H(+). Nucleoside triphosphate pyrophosphatase. May have a dual role in cell division arrest and in preventing the incorporation of modified nucleotides into cellular nucleic acids. In Ruegeria pomeroyi (strain ATCC 700808 / DSM 15171 / DSS-3) (Silicibacter pomeroyi), this protein is Nucleoside triphosphate pyrophosphatase.